A 610-amino-acid chain; its full sequence is POU domain, class 6, transcription factor 1 (610 aa).

Residues 55 to 87 (SSAGAAESGGDEEGSGQSLEATEEAQLDGPVTT) are disordered. The POU-specific domain maps to 448–522 (EEAINLEEIR…VLERWLAEAE (75 aa)). The segment at residues 543-602 (KRKRRTSFTPQAIEVLNTYFEKNSLPTGQEITEIAKELNYDREVVRVWFCNRRQTLKNTS) is a DNA-binding region (homeobox).

It belongs to the POU transcription factor family. Class-6 subfamily. Ubiquitously expressed during embryogenesis.

The protein localises to the nucleus. Functionally, transcription factor that binds with high affinity to the motif 5'-TAATGARAT-3'. The protein is POU domain, class 6, transcription factor 1 (pou6f1) of Danio rerio (Zebrafish).